A 455-amino-acid polypeptide reads, in one-letter code: Golgi pH regulator (455 aa).

2 helical membrane-spanning segments follow: residues 5-25 (ADSV…WLFF) and 46-66 (VTFA…LGLL). N-linked (GlcNAc...) asparagine glycosylation occurs at asparagine 67. The next 3 membrane-spanning stretches (helical) occupy residues 79–99 (LCVI…YFVV), 111–131 (LFSC…GDPF), and 150–170 (VGVI…VNCP). N-linked (GlcNAc...) asparagine glycosylation is present at asparagine 180. 4 helical membrane passes run 290 to 310 (GYFF…NIVF), 343 to 363 (ISFI…LITL), 378 to 398 (VIVL…VLLI), and 425 to 445 (WFDV…YLAH).

Belongs to the Golgi pH regulator (TC 1.A.38) family. Homotrimer.

It is found in the golgi apparatus membrane. The enzyme catalyses iodide(out) = iodide(in). The catalysed reaction is chloride(in) = chloride(out). It catalyses the reaction bromide(in) = bromide(out). It carries out the reaction fluoride(in) = fluoride(out). Its function is as follows. Voltage-gated channel that enables the transfer of anions such as iodide, chloride, bromide and fluoride which may function in counter-ion conductance and participates in Golgi acidification. The protein is Golgi pH regulator (gpr89-b) of Xenopus laevis (African clawed frog).